Reading from the N-terminus, the 100-residue chain is Small ribosomal subunit protein uS14c (100 aa).

It belongs to the universal ribosomal protein uS14 family. Part of the 30S ribosomal subunit.

The protein resides in the plastid. Functionally, binds 16S rRNA, required for the assembly of 30S particles. The chain is Small ribosomal subunit protein uS14c from Cuscuta exaltata (Tall dodder).